Consider the following 561-residue polypeptide: Putative transport protein YbjL (561 aa).

Helical transmembrane passes span 8-28 (LLNG…LCLG), 32-52 (LGSI…LLGQ), 66-86 (FMLF…SIFF), 94-114 (MLAL…GKLF), and 158-178 (NLSL…IVGA). 2 RCK C-terminal domains span residues 200 to 288 (RGLD…SFRN) and 292 to 373 (VFDR…RIGF). 5 consecutive transmembrane segments (helical) span residues 383–403 (LLAF…TFQF), 406–426 (FSFG…LGFM), 451–471 (VFMA…LGAI), 475–495 (MLIA…LFGA), and 540–560 (AIAN…WPGL).

It belongs to the AAE transporter (TC 2.A.81) family. YbjL subfamily.

It is found in the cell membrane. The polypeptide is Putative transport protein YbjL (Shigella sonnei (strain Ss046)).